A 143-amino-acid chain; its full sequence is Large ribosomal subunit protein uL11 (143 aa).

Belongs to the universal ribosomal protein uL11 family. Part of the ribosomal stalk of the 50S ribosomal subunit. Interacts with L10 and the large rRNA to form the base of the stalk. L10 forms an elongated spine to which L12 dimers bind in a sequential fashion forming a multimeric L10(L12)X complex. In terms of processing, one or more lysine residues are methylated.

In terms of biological role, forms part of the ribosomal stalk which helps the ribosome interact with GTP-bound translation factors. The sequence is that of Large ribosomal subunit protein uL11 from Acidovorax ebreus (strain TPSY) (Diaphorobacter sp. (strain TPSY)).